The chain runs to 405 residues: Acetylornithine/succinyldiaminopimelate aminotransferase (405 aa).

Pyridoxal 5'-phosphate is bound by residues 108-109 (GT) and F141. R144 lines the N(2)-acetyl-L-ornithine pocket. 226 to 229 (DEVQ) is a pyridoxal 5'-phosphate binding site. K255 is subject to N6-(pyridoxal phosphate)lysine. Residue S283 participates in N(2)-acetyl-L-ornithine binding. A pyridoxal 5'-phosphate-binding site is contributed by T284.

The protein belongs to the class-III pyridoxal-phosphate-dependent aminotransferase family. ArgD subfamily. As to quaternary structure, homodimer. Pyridoxal 5'-phosphate serves as cofactor.

It localises to the cytoplasm. The enzyme catalyses N(2)-acetyl-L-ornithine + 2-oxoglutarate = N-acetyl-L-glutamate 5-semialdehyde + L-glutamate. It catalyses the reaction N-succinyl-(2S,6S)-2,6-diaminopimelate + 2-oxoglutarate = (S)-2-succinylamino-6-oxoheptanedioate + L-glutamate. The protein operates within amino-acid biosynthesis; L-arginine biosynthesis; N(2)-acetyl-L-ornithine from L-glutamate: step 4/4. Its pathway is amino-acid biosynthesis; L-lysine biosynthesis via DAP pathway; LL-2,6-diaminopimelate from (S)-tetrahydrodipicolinate (succinylase route): step 2/3. Involved in both the arginine and lysine biosynthetic pathways. This chain is Acetylornithine/succinyldiaminopimelate aminotransferase, found in Salmonella typhi.